The following is a 394-amino-acid chain: Elongation factor Tu (394 aa).

In terms of domain architecture, tr-type G spans 10 to 204 (KPHINVGTIG…HLDNYIPEPK (195 aa)). Residues 19-26 (GHVDHGKT) form a G1 region. 19–26 (GHVDHGKT) is a binding site for GTP. Mg(2+) is bound at residue threonine 26. The tract at residues 60-64 (GITIN) is G2. The interval 81-84 (DCPG) is G3. GTP is bound by residues 81-85 (DCPGH) and 136-139 (NKCD). A G4 region spans residues 136 to 139 (NKCD). Residues 174–176 (SAL) form a G5 region.

Belongs to the TRAFAC class translation factor GTPase superfamily. Classic translation factor GTPase family. EF-Tu/EF-1A subfamily. As to quaternary structure, monomer.

Its subcellular location is the cytoplasm. It catalyses the reaction GTP + H2O = GDP + phosphate + H(+). GTP hydrolase that promotes the GTP-dependent binding of aminoacyl-tRNA to the A-site of ribosomes during protein biosynthesis. This is Elongation factor Tu from Wigglesworthia glossinidia brevipalpis.